A 134-amino-acid chain; its full sequence is ATP synthase epsilon chain, chloroplastic (134 aa).

It belongs to the ATPase epsilon chain family. F-type ATPases have 2 components, CF(1) - the catalytic core - and CF(0) - the membrane proton channel. CF(1) has five subunits: alpha(3), beta(3), gamma(1), delta(1), epsilon(1). CF(0) has three main subunits: a, b and c.

It is found in the plastid. The protein localises to the chloroplast thylakoid membrane. Produces ATP from ADP in the presence of a proton gradient across the membrane. In Pyropia yezoensis (Susabi-nori), this protein is ATP synthase epsilon chain, chloroplastic.